The following is a 703-amino-acid chain: Peptide transporter CstA (703 aa).

Helical transmembrane passes span 6–26, 29–49, 87–107, 118–138, 162–182, 190–210, 221–241, 256–276, 282–302, 319–339, 374–394, 463–483, 514–534, 547–567, 574–594, and 660–680; these read TKIL…YLAL, GESV…MIGY, VLFG…GPIL, LWIL…VLFI, VAMV…AMVV, PWGL…GIYM, ASII…VIAA, LAIV…WFLL, LSTF…VLVA, GPVF…CGAI, AVAI…YFAI, LMAF…LTAV, GLLA…QGAI, FGVS…TILV, YTWV…YGGI, and AILC…CIGI.

The protein belongs to the peptide transporter carbon starvation (CstA) (TC 2.A.114) family.

The protein localises to the cell inner membrane. In terms of biological role, involved in the uptake of dipeptides and tripeptides. May influence host-pathogen interactions. Involved in motility and agglutination, and has a role in stimulation of dendritic cells. The chain is Peptide transporter CstA from Campylobacter jejuni subsp. jejuni serotype O:2 (strain ATCC 700819 / NCTC 11168).